The sequence spans 282 residues: Bifunctional protein FolD (282 aa).

NADP(+) is bound by residues 164 to 166, Ile189, and Ile230; that span reads GAS.

It belongs to the tetrahydrofolate dehydrogenase/cyclohydrolase family. In terms of assembly, homodimer.

It carries out the reaction (6R)-5,10-methylene-5,6,7,8-tetrahydrofolate + NADP(+) = (6R)-5,10-methenyltetrahydrofolate + NADPH. The catalysed reaction is (6R)-5,10-methenyltetrahydrofolate + H2O = (6R)-10-formyltetrahydrofolate + H(+). The protein operates within one-carbon metabolism; tetrahydrofolate interconversion. In terms of biological role, catalyzes the oxidation of 5,10-methylenetetrahydrofolate to 5,10-methenyltetrahydrofolate and then the hydrolysis of 5,10-methenyltetrahydrofolate to 10-formyltetrahydrofolate. This chain is Bifunctional protein FolD, found in Campylobacter jejuni (strain RM1221).